A 418-amino-acid chain; its full sequence is D-amino acid dehydrogenase (418 aa).

3 to 17 (VLVLGAGVAGVSSAW) provides a ligand contact to FAD.

It belongs to the DadA oxidoreductase family. FAD is required as a cofactor.

It catalyses the reaction a D-alpha-amino acid + A + H2O = a 2-oxocarboxylate + AH2 + NH4(+). It functions in the pathway amino-acid degradation; D-alanine degradation; NH(3) and pyruvate from D-alanine: step 1/1. Oxidative deamination of D-amino acids. The protein is D-amino acid dehydrogenase of Neisseria meningitidis serogroup C / serotype 2a (strain ATCC 700532 / DSM 15464 / FAM18).